The sequence spans 395 residues: Beta-1,4-galactosyltransferase 3 (395 aa).

The Cytoplasmic segment spans residues 1–10 (MLRRLLERPC). Residues 11–31 (TLALLVGSQLAVMMYLSLGGF) traverse the membrane as a helical; Signal-anchor for type II membrane protein segment. The Lumenal segment spans residues 32-395 (RSLSALFGRD…ANHTAPHGSH (364 aa)). A glycan (N-linked (GlcNAc...) asparagine) is linked at Asn57. A disulfide bond links Cys79 and Cys121. 132–136 (PHRAR) provides a ligand contact to UDP-alpha-D-galactose. Asn168 is a glycosylation site (N-linked (GlcNAc...) asparagine). UDP-alpha-D-galactose-binding positions include 171–173 (FNR), 198–199 (VD), Tyr228, and Trp260. Residues Cys192 and Cys211 are joined by a disulfide bond. Residue Asp199 participates in Mn(2+) binding. 262 to 265 (GEDD) is an N-acetyl-D-glucosamine binding site. His293 provides a ligand contact to Mn(2+). 293 to 295 (HRG) provides a ligand contact to UDP-alpha-D-galactose. Arg305 is an N-acetyl-D-glucosamine binding site. N-linked (GlcNAc...) asparagine glycosylation is found at Asn339 and Asn387. A disordered region spans residues 341 to 395 (TADIGTDPRGPRAPSGPRYPPGSSQAFRQEMLQRRPPARPGPLPTANHTAPHGSH).

This sequence belongs to the glycosyltransferase 7 family. It depends on Mn(2+) as a cofactor.

Its subcellular location is the golgi apparatus. It is found in the golgi stack membrane. It catalyses the reaction an N-acetyl-beta-D-glucosaminyl derivative + UDP-alpha-D-galactose = a beta-D-galactosyl-(1-&gt;4)-N-acetyl-beta-D-glucosaminyl derivative + UDP + H(+). The enzyme catalyses N-acetyl-D-glucosamine + UDP-alpha-D-galactose = beta-D-galactosyl-(1-&gt;4)-N-acetyl-D-glucosamine + UDP + H(+). It carries out the reaction a beta-D-GlcNAc-(1-&gt;3)-beta-D-Gal-(1-&gt;4)-beta-D-Glc-(1&lt;-&gt;1)-Cer(d18:1(4E)) + UDP-alpha-D-galactose = a neolactoside nLc4Cer(d18:1(4E)) + UDP + H(+). The catalysed reaction is a beta-D-glucosylceramide + UDP-alpha-D-galactose = a beta-D-galactosyl-(1-&gt;4)-beta-D-glucosyl-(1&lt;-&gt;1)-ceramide + UDP + H(+). It catalyses the reaction a neolactoside IV(3)-beta-GlcNAc-nLc4Cer + UDP-alpha-D-galactose = a neolactoside nLc6Cer + UDP + H(+). It participates in protein modification; protein glycosylation. Functionally, responsible for the synthesis of complex-type N-linked oligosaccharides in many glycoproteins as well as the carbohydrate moieties of glycolipids. The polypeptide is Beta-1,4-galactosyltransferase 3 (Rattus norvegicus (Rat)).